The sequence spans 327 residues: Malate dehydrogenase (327 aa).

Residue 11-17 participates in NAD(+) binding; sequence GAAGQIS. The substrate site is built by arginine 92 and arginine 98. Residues asparagine 105, glutamine 112, and 129-131 contribute to the NAD(+) site; that span reads VGN. The substrate site is built by asparagine 131 and arginine 162. Histidine 187 functions as the Proton acceptor in the catalytic mechanism.

The protein belongs to the LDH/MDH superfamily. MDH type 2 family.

The catalysed reaction is (S)-malate + NAD(+) = oxaloacetate + NADH + H(+). In terms of biological role, catalyzes the reversible oxidation of malate to oxaloacetate. This Teredinibacter turnerae (strain ATCC 39867 / T7901) protein is Malate dehydrogenase.